A 138-amino-acid chain; its full sequence is Ribosome-binding factor A (138 aa).

This sequence belongs to the RbfA family. In terms of assembly, monomer. Binds 30S ribosomal subunits, but not 50S ribosomal subunits or 70S ribosomes.

Its subcellular location is the cytoplasm. Functionally, one of several proteins that assist in the late maturation steps of the functional core of the 30S ribosomal subunit. Associates with free 30S ribosomal subunits (but not with 30S subunits that are part of 70S ribosomes or polysomes). Required for efficient processing of 16S rRNA. May interact with the 5'-terminal helix region of 16S rRNA. The polypeptide is Ribosome-binding factor A (Chromobacterium violaceum (strain ATCC 12472 / DSM 30191 / JCM 1249 / CCUG 213 / NBRC 12614 / NCIMB 9131 / NCTC 9757 / MK)).